The primary structure comprises 651 residues: Intraflagellar transport protein 70A (651 aa).

7 TPR repeats span residues 8 to 41 (DGEY…QYRS), 42 to 75 (RAGL…SPEV), 140 to 173 (PESE…MGYK), 175 to 207 (DLSF…GIRE), 372 to 405 (LTEQ…YDET), 410 to 443 (IPVL…CNEH), and 445 to 478 (IWKL…HYDN). Positions 494–521 (YIMTSQNEEAEELMRKIEKEEEQIAYEN) form a coiled coil. Residues 530 to 563 (CIVNLVIGTLYCAKGNYEFGISRVIKSLEPYNKK) form a TPR 8 repeat.

It belongs to the TTC30/dfy-1/fleer family.

It is found in the cell projection. The protein localises to the cilium. In terms of biological role, required for polyglutamylation of axonemal tubulin. Plays a role in anterograde intraflagellar transport (IFT), the process by which cilia precursors are transported from the base of the cilium to the site of their incorporation at the tip. This Xenopus laevis (African clawed frog) protein is Intraflagellar transport protein 70A (ift70a).